A 183-amino-acid chain; its full sequence is NADH dehydrogenase [ubiquinone] iron-sulfur protein 4, mitochondrial (183 aa).

The transit peptide at 1–28 (MSALRQVMCRSTASLQLYQANRAAAARW) directs the protein to the mitochondrion. A Phosphoserine modification is found at Ser181.

Belongs to the complex I NDUFS4 subunit family.

Its subcellular location is the mitochondrion inner membrane. Its function is as follows. Accessory subunit of the mitochondrial membrane respiratory chain NADH dehydrogenase (Complex I), that is believed not to be involved in catalysis. Complex I functions in the transfer of electrons from NADH to the respiratory chain. The immediate electron acceptor for the enzyme is believed to be ubiquinone. The chain is NADH dehydrogenase [ubiquinone] iron-sulfur protein 4, mitochondrial from Drosophila melanogaster (Fruit fly).